The following is a 286-amino-acid chain: Bifunctional protein FolD (286 aa).

NADP(+) contacts are provided by residues 163 to 165 (GMS), Ile-188, and Ile-229.

The protein belongs to the tetrahydrofolate dehydrogenase/cyclohydrolase family. As to quaternary structure, homodimer.

It carries out the reaction (6R)-5,10-methylene-5,6,7,8-tetrahydrofolate + NADP(+) = (6R)-5,10-methenyltetrahydrofolate + NADPH. The enzyme catalyses (6R)-5,10-methenyltetrahydrofolate + H2O = (6R)-10-formyltetrahydrofolate + H(+). It functions in the pathway one-carbon metabolism; tetrahydrofolate interconversion. Catalyzes the oxidation of 5,10-methylenetetrahydrofolate to 5,10-methenyltetrahydrofolate and then the hydrolysis of 5,10-methenyltetrahydrofolate to 10-formyltetrahydrofolate. The chain is Bifunctional protein FolD from Helicobacter hepaticus (strain ATCC 51449 / 3B1).